Here is a 540-residue protein sequence, read N- to C-terminus: Growth factor receptor-bound protein 14 (540 aa).

Residues 1-23 (MTTSLQDGQSAAGRAAARDSPLA) form a disordered region. An N-acetylthreonine modification is found at T2. The Ras-associating domain maps to 106–192 (KKQVIKVYSE…NKLYFRKNYA (87 aa)). The PH domain maps to 234 to 342 (YPEIHGFLHA…WVTAIRLLKY (109 aa)). Residues S372 and S375 each carry the phosphoserine modification. The SH2 domain maps to 439–535 (WFHHKMSREE…VLPCKLKHYC (97 aa)).

This sequence belongs to the GRB7/10/14 family. In terms of assembly, interacts with the cytoplasmic domain of the autophosphorylated insulin receptor, through the SH2 domain. Interacts with GRB14 (via BPS domain); this interaction protects the tyrosines in the activation loop on INSR from dephosphorylation. Binds to the ankyrin repeat region of TNKS2 via its N-terminus. Interacts with activated NRAS. Interacts (via SH2 domain) with TEK/TIE2 (tyrosine phosphorylated). In terms of processing, phosphorylated on serine residues. Phosphorylated on tyrosine residues by TEK/TIE2.

It is found in the cytoplasm. The protein localises to the endosome membrane. Adapter protein which modulates coupling of cell surface receptor kinases with specific signaling pathways. Binds to, and suppresses signals from, the activated insulin receptor (INSR). Potent inhibitor of insulin-stimulated MAPK3 phosphorylation. Plays a critical role regulating PDPK1 membrane translocation in response to insulin stimulation and serves as an adapter protein to recruit PDPK1 to activated insulin receptor, thus promoting PKB/AKT1 phosphorylation and transduction of the insulin signal. This is Growth factor receptor-bound protein 14 (GRB14) from Bos taurus (Bovine).